The primary structure comprises 927 residues: Bifunctional glutamine synthetase adenylyltransferase/adenylyl-removing enzyme (927 aa).

An adenylyl removase region spans residues 1–428 (MTMTDASDLL…AQFDQVFADK (428 aa)). Positions 438-927 (DQAAGCIWSG…AALWARVFGA (490 aa)) are adenylyl transferase.

This sequence belongs to the GlnE family. Mg(2+) is required as a cofactor.

It carries out the reaction [glutamine synthetase]-O(4)-(5'-adenylyl)-L-tyrosine + phosphate = [glutamine synthetase]-L-tyrosine + ADP. The catalysed reaction is [glutamine synthetase]-L-tyrosine + ATP = [glutamine synthetase]-O(4)-(5'-adenylyl)-L-tyrosine + diphosphate. Involved in the regulation of glutamine synthetase GlnA, a key enzyme in the process to assimilate ammonia. When cellular nitrogen levels are high, the C-terminal adenylyl transferase (AT) inactivates GlnA by covalent transfer of an adenylyl group from ATP to specific tyrosine residue of GlnA, thus reducing its activity. Conversely, when nitrogen levels are low, the N-terminal adenylyl removase (AR) activates GlnA by removing the adenylyl group by phosphorolysis, increasing its activity. The regulatory region of GlnE binds the signal transduction protein PII (GlnB) which indicates the nitrogen status of the cell. This is Bifunctional glutamine synthetase adenylyltransferase/adenylyl-removing enzyme from Burkholderia pseudomallei (strain K96243).